Consider the following 203-residue polypeptide: A-type ATP synthase subunit E (203 aa).

Belongs to the V-ATPase E subunit family. As to quaternary structure, has multiple subunits with at least A(3), B(3), C, D, E, F, H, I and proteolipid K(x).

Its subcellular location is the cell membrane. Functionally, component of the A-type ATP synthase that produces ATP from ADP in the presence of a proton gradient across the membrane. The sequence is that of A-type ATP synthase subunit E from Methanococcus vannielii (strain ATCC 35089 / DSM 1224 / JCM 13029 / OCM 148 / SB).